We begin with the raw amino-acid sequence, 74 residues long: Large ribosomal subunit protein bL31 (74 aa).

It belongs to the bacterial ribosomal protein bL31 family. Type A subfamily. In terms of assembly, part of the 50S ribosomal subunit.

Its function is as follows. Binds the 23S rRNA. The chain is Large ribosomal subunit protein bL31 from Phenylobacterium zucineum (strain HLK1).